Here is a 222-residue protein sequence, read N- to C-terminus: Imidazoleglycerol-phosphate dehydratase (222 aa).

This sequence belongs to the imidazoleglycerol-phosphate dehydratase family.

It catalyses the reaction D-erythro-1-(imidazol-4-yl)glycerol 3-phosphate = 3-(imidazol-4-yl)-2-oxopropyl phosphate + H2O. Its pathway is amino-acid biosynthesis; L-histidine biosynthesis; L-histidine from 5-phospho-alpha-D-ribose 1-diphosphate: step 6/9. The protein is Imidazoleglycerol-phosphate dehydratase (HIS3) of Scheffersomyces stipitis (strain ATCC 58785 / CBS 6054 / NBRC 10063 / NRRL Y-11545) (Yeast).